Reading from the N-terminus, the 640-residue chain is uncharacterized protein (640 aa).

The next 14 helical transmembrane spans lie at 8–28, 52–72, 90–110, 136–156, 179–199, 208–228, 241–261, 277–297, 298–318, 352–372, 391–411, 446–466, 497–517, and 619–639; these read GGVV…LGMF, LGGF…CYLI, LFVA…FLLA, LWYA…LVVL, VFML…LHAW, PSPV…YGIV, WWGL…VLQA, ENMG…DTGA, YGPA…HAAF, TVFF…AGFV, IVAL…GLSV, AIAA…APMV, IAPG…AVLA, and GSVH…LVVA.

It belongs to the complex I subunit 4 family.

The protein resides in the cell membrane. This is an uncharacterized protein from Mycobacterium tuberculosis (strain CDC 1551 / Oshkosh).